We begin with the raw amino-acid sequence, 144 residues long: Large ribosomal subunit protein uL16 (144 aa).

This sequence belongs to the universal ribosomal protein uL16 family. Part of the 50S ribosomal subunit.

Its function is as follows. Binds 23S rRNA and is also seen to make contacts with the A and possibly P site tRNAs. The protein is Large ribosomal subunit protein uL16 of Halalkalibacterium halodurans (strain ATCC BAA-125 / DSM 18197 / FERM 7344 / JCM 9153 / C-125) (Bacillus halodurans).